The chain runs to 452 residues: Transcription factor ETV6 (452 aa).

Lys11 is modified (N6-acetyllysine; alternate). Residue Lys11 forms a Glycyl lysine isopeptide (Lys-Gly) (interchain with G-Cter in SUMO2); alternate linkage. Thr18 is subject to Phosphothreonine. At Ser22 the chain carries Phosphoserine. Residues 40-124 (ALRMEEDSIR…ELLQHILKQR (85 aa)) enclose the PNT domain. The segment at 154–262 (EDNGVQRTSR…PRPSSPRQEG (109 aa)) is disordered. The segment covering 158–174 (VQRTSRPSAENVHQNPP) has biased composition (polar residues). Phosphoserine occurs at positions 213, 238, and 257. Residue Lys288 forms a Glycyl lysine isopeptide (Lys-Gly) (interchain with G-Cter in SUMO2) linkage. Lys302 bears the N6-acetyllysine; alternate mark. Lys302 is covalently cross-linked (Glycyl lysine isopeptide (Lys-Gly) (interchain with G-Cter in SUMO2); alternate). Phosphoserine is present on Ser323. Positions 339 to 420 (RLLWDYVYQL…PGQRLLFRFM (82 aa)) form a DNA-binding region, ETS. Glycyl lysine isopeptide (Lys-Gly) (interchain with G-Cter in SUMO2) cross-links involve residues Lys403 and Lys421.

Belongs to the ETS family. In terms of assembly, can form homodimers or heterodimers with TEL2 or FLI1. Interacts with L3MBTL1 and HDAC9.

It is found in the nucleus. In terms of biological role, transcriptional repressor; binds to the DNA sequence 5'-CCGGAAGT-3'. Plays a role in hematopoiesis and malignant transformation. The polypeptide is Transcription factor ETV6 (ETV6) (Bos taurus (Bovine)).